We begin with the raw amino-acid sequence, 405 residues long: Growth/differentiation factor 11 (405 aa).

The N-terminal stretch at 1 to 24 (MVLAAPLLLGFLLLALELRPRGEA) is a signal peptide. Residues 25–296 (AEGPAAAAAA…VLENTKRSRR (272 aa)) constitute a propeptide that is removed on maturation. N-linked (GlcNAc...) asparagine glycosylation is present at asparagine 92. 4 disulfides stabilise this stretch: cysteine 302-cysteine 312, cysteine 311-cysteine 370, cysteine 339-cysteine 402, and cysteine 343-cysteine 404.

This sequence belongs to the TGF-beta family. As to quaternary structure, homodimer; disulfide-linked. Interacts directly with ACVR2B. Interacts directly with ACVR2A. Interacts with ACVR1B, TGFBR1 and ACVR1C in an ACVR2B-dependent manner. Interacts with FST isoform 2/FS288. Synthesized as large precursor molecule that undergoes proteolytic cleavage by furin-like proteases. This produces an inactive form consisting of the mature C-terminal portion non-covalently bound to its cleaved N-terminal propeptide. Activation of the mature form requires additional cleavage of the propeptide by a tolloid-like metalloproteinase.

The protein localises to the secreted. In terms of biological role, secreted signal that acts globally to regulate anterior/posterior axial patterning during development. May play critical roles in patterning both mesodermal and neural tissues. It is required for proper vertebral patterning and orofacial development. Signals through activin receptors type-2, ACVR2A and ACVR2B, and activin receptors type-1, ACVR1B, ACVR1C and TGFBR1 leading to the phosphorylation of SMAD2 and SMAD3. In Rattus norvegicus (Rat), this protein is Growth/differentiation factor 11 (Gdf11).